The chain runs to 1342 residues: DNA-directed RNA polymerase subunit beta (1342 aa).

This sequence belongs to the RNA polymerase beta chain family. As to quaternary structure, the RNAP catalytic core consists of 2 alpha, 1 beta, 1 beta' and 1 omega subunit. When a sigma factor is associated with the core the holoenzyme is formed, which can initiate transcription.

It catalyses the reaction RNA(n) + a ribonucleoside 5'-triphosphate = RNA(n+1) + diphosphate. DNA-dependent RNA polymerase catalyzes the transcription of DNA into RNA using the four ribonucleoside triphosphates as substrates. This is DNA-directed RNA polymerase subunit beta from Buchnera aphidicola subsp. Schizaphis graminum (strain Sg).